A 212-amino-acid polypeptide reads, in one-letter code: External core antigen (212 aa).

The N-terminal stretch at 1-19 (MQLFHLCLIISCSCPTVQA) is a signal peptide. The segment at 25–27 (GWL) is HBEAG. The tract at residues 165-212 (NAPILSTLPETTVVRRRGRSPRRRTPSPRRRRSQSPRRRRSQSRESQC) is disordered. Positions 178–205 (VRRRGRSPRRRTPSPRRRRSQSPRRRRS) are enriched in basic residues. One copy of the 1; half-length repeat lies at 184–190 (SPRRRTP). A 3 X 8 AA repeats of S-P-R-R-R-R-S-Q region spans residues 184 to 206 (SPRRRTPSPRRRRSQSPRRRRSQ). Residues 184–212 (SPRRRTPSPRRRRSQSPRRRRSQSRESQC) constitute a propeptide that is removed on maturation. 2 repeat units span residues 191–198 (SPRRRRSQ) and 199–206 (SPRRRRSQ).

Belongs to the orthohepadnavirus precore antigen family. Homodimerizes. Post-translationally, phosphorylated. In terms of processing, cleaved by host furin.

Its subcellular location is the secreted. It localises to the host nucleus. Its function is as follows. May regulate immune response to the intracellular capsid in acting as a T-cell tolerogen, by having an immunoregulatory effect which prevents destruction of infected cells by cytotoxic T-cells. This immune regulation may predispose to chronicity during perinatal infections and prevent severe liver injury during adult infections. The protein is External core antigen of Homo sapiens (Human).